Reading from the N-terminus, the 102-residue chain is Putative nuclear receptor corepressor 1-like protein NCOR1P1 (102 aa).

Residues 1 to 18 (MSSSGYPPNQGAFSTEQS) are compositionally biased toward polar residues. The interval 1-68 (MSSSGYPPNQ…DQNASPSKLS (68 aa)) is disordered. Positions 68-100 (SKEELIECMDRVDREIAKVEQQILKLKKKQVKV) form a coiled coil.

This sequence belongs to the N-CoR nuclear receptor corepressors family.

In Homo sapiens (Human), this protein is Putative nuclear receptor corepressor 1-like protein NCOR1P1 (NCOR1P1).